The following is a 64-amino-acid chain: Prokaryotic ubiquitin-like protein Pup (64 aa).

The interval 1-32 is disordered; that stretch reads MNAKQTQIMGGGGRDEDNAEDSAQASGQVQIN. The segment at 20–58 is ARC ATPase binding; it reads EDSAQASGQVQINTEGVDSLLDEIDGLLENNAEEFVRSY. The span at 21–32 shows a compositional bias: polar residues; the sequence is DSAQASGQVQIN. Glu64 participates in a covalent cross-link: Isoglutamyl lysine isopeptide (Glu-Lys) (interchain with K-? in acceptor proteins).

This sequence belongs to the prokaryotic ubiquitin-like protein family. Strongly interacts with the proteasome-associated ATPase ARC through a hydrophobic interface; the interacting region of Pup lies in its C-terminal half. There is one Pup binding site per ARC hexamer ring.

It functions in the pathway protein degradation; proteasomal Pup-dependent pathway. In terms of biological role, protein modifier that is covalently attached to lysine residues of substrate proteins, thereby targeting them for proteasomal degradation. The tagging system is termed pupylation. The polypeptide is Prokaryotic ubiquitin-like protein Pup (Corynebacterium glutamicum (strain R)).